Consider the following 372-residue polypeptide: Secreted beta-glucosidase SIM1 (372 aa).

Positions 1-15 (MKYLTLLTVLSTALA) are cleaved as a signal peptide. The segment at 51–85 (VTENASSGASSGETAETIQTRSSSDVSSSSDSNPV) is disordered. Low complexity predominate over residues 52-85 (TENASSGASSGETAETIQTRSSSDVSSSSDSNPV). Residues Asn54 and Asn351 are each glycosylated (N-linked (GlcNAc...) asparagine).

Belongs to the SUN family.

It localises to the secreted. Its subcellular location is the cell wall. In terms of biological role, cell surface beta-glucosidase involved in cell wall maintenance and cytokinesis. Plays a role redundant to SUN41. The sequence is that of Secreted beta-glucosidase SIM1 (SIM1) from Candida albicans (strain SC5314 / ATCC MYA-2876) (Yeast).